Here is a 117-residue protein sequence, read N- to C-terminus: Large ribosomal subunit protein bL20c (117 aa).

Belongs to the bacterial ribosomal protein bL20 family.

It is found in the plastid. The protein localises to the chloroplast. In terms of biological role, binds directly to 23S ribosomal RNA and is necessary for the in vitro assembly process of the 50S ribosomal subunit. It is not involved in the protein synthesizing functions of that subunit. This chain is Large ribosomal subunit protein bL20c, found in Calycanthus floridus var. glaucus (Eastern sweetshrub).